The following is a 321-amino-acid chain: Ribosomal RNA small subunit methyltransferase H (321 aa).

Residues 29 to 31 (GGH), Asp-48, Tyr-76, Asp-97, and Gln-104 contribute to the S-adenosyl-L-methionine site. Residues 277–321 (LTRGAEPASETEKAENPRAASVRLRAVERTAPNPDHTRKPTGGAS) are disordered.

The protein belongs to the methyltransferase superfamily. RsmH family.

It is found in the cytoplasm. It carries out the reaction cytidine(1402) in 16S rRNA + S-adenosyl-L-methionine = N(4)-methylcytidine(1402) in 16S rRNA + S-adenosyl-L-homocysteine + H(+). Its function is as follows. Specifically methylates the N4 position of cytidine in position 1402 (C1402) of 16S rRNA. This Frankia casuarinae (strain DSM 45818 / CECT 9043 / HFP020203 / CcI3) protein is Ribosomal RNA small subunit methyltransferase H.